Here is an 889-residue protein sequence, read N- to C-terminus: Terminal uridylyltransferase 3 (889 aa).

The C2H2-type; atypical zinc finger occupies 123–151 (VRCDLCAKMIESRDEEQIQEHFQVHHAAL). Zn(2+)-binding residues include Cys-125, Cys-128, His-143, and His-148. Residues Ser-225 and 236-239 (SDAD) contribute to the UTP site. Asp-237 and Asp-239 together coordinate Mg(2+). Arg-286 lines the RNA pocket. Residues 394-398 (GVRNS), Lys-419, Lys-423, and 437-438 (SY) contribute to the UTP site. In terms of domain architecture, PAP-associated spans 505–572 (LGGLIPLFFL…LCIDDPYEDN (68 aa)). The Nucleotide recognition motif (NRM) motif lies at 565 to 574 (IDDPYEDNFN). Disordered regions lie at residues 675–702 (NNKS…HVES) and 829–849 (RKKS…NHAG). Positions 829–846 (RKKSKGSKKRKNAVRRGN) are enriched in basic residues.

Belongs to the DNA polymerase type-B-like family. The cofactor is Mg(2+). Mn(2+) serves as cofactor.

It localises to the cytoplasm. The enzyme catalyses RNA(n) + UTP = RNA(n)-3'-uridine ribonucleotide + diphosphate. Functionally, terminal uridylyltransferase which catalyzes the addition of Us to the 3'-hydroxyl group of single-stranded RNAs. Does not mediate RNA-independent UTP polymerization. This chain is Terminal uridylyltransferase 3, found in Trypanosoma brucei brucei.